We begin with the raw amino-acid sequence, 490 residues long: Cobyric acid synthase (490 aa).

The GATase cobBQ-type domain maps to 252 to 439 (RLKVVVPVLP…LHGLFESTAA (188 aa)). Cys-333 functions as the Nucleophile in the catalytic mechanism. Residue His-431 is part of the active site.

Belongs to the CobB/CobQ family. CobQ subfamily.

Its pathway is cofactor biosynthesis; adenosylcobalamin biosynthesis. In terms of biological role, catalyzes amidations at positions B, D, E, and G on adenosylcobyrinic A,C-diamide. NH(2) groups are provided by glutamine, and one molecule of ATP is hydrogenolyzed for each amidation. This is Cobyric acid synthase from Pseudomonas aeruginosa (strain UCBPP-PA14).